The chain runs to 307 residues: 4-hydroxybenzoate geranyltransferase 1 (307 aa).

The next 8 helical transmembrane spans lie at 38–58, 62–82, 120–140, 154–174, 179–199, 230–250, 252–272, and 286–306; these read PIGS…AADL, PKML…GCTI, LFIG…LAIV, ITYW…LLGS, GSVV…WTLV, MWIS…GLIL, IGLP…WQIF, and FVSN…GRLF.

It belongs to the UbiA prenyltransferase family. The cofactor is Mg(2+). As to expression, expressed only in roots.

The protein localises to the endoplasmic reticulum membrane. The catalysed reaction is 4-hydroxybenzoate + (2E)-geranyl diphosphate = 3-geranyl-4-hydroxybenzoate + diphosphate. In terms of biological role, prenyltransferase involved in the biosynthesis of shikonin, a naphthoquinone secondary metabolite. Could accept only geranyl diphosphate and not dimethylallyl diphosphate, farnesyl diphosphate, or geranylgeranyl diphosphate as substrate. This is 4-hydroxybenzoate geranyltransferase 1 (PGT-1) from Lithospermum erythrorhizon (Purple gromwell).